The chain runs to 475 residues: UDP-N-acetylmuramate--L-alanine ligase (475 aa).

125-131 (GTHGKTS) lines the ATP pocket.

Belongs to the MurCDEF family.

It localises to the cytoplasm. It catalyses the reaction UDP-N-acetyl-alpha-D-muramate + L-alanine + ATP = UDP-N-acetyl-alpha-D-muramoyl-L-alanine + ADP + phosphate + H(+). The protein operates within cell wall biogenesis; peptidoglycan biosynthesis. In terms of biological role, cell wall formation. This chain is UDP-N-acetylmuramate--L-alanine ligase, found in Mycolicibacterium gilvum (strain PYR-GCK) (Mycobacterium gilvum (strain PYR-GCK)).